A 147-amino-acid polypeptide reads, in one-letter code: Hemoglobin subunit gamma (147 aa).

The Globin domain occupies 3–147 (YFTAEEKAAI…VASALARKYH (145 aa)). Heme b-binding residues include H64 and H93.

It belongs to the globin family. As to quaternary structure, heterotetramer of two alpha chains and two gamma chains in fetal hemoglobin (Hb F). Red blood cells.

Functionally, gamma chains make up the fetal hemoglobin F, in combination with alpha chains. The protein is Hemoglobin subunit gamma (HBG) of Dugong dugon (Dugong).